The sequence spans 923 residues: Helicase POLQ-like (923 aa).

A disordered region spans residues 1-84 (MNRTPIRRCK…STVTPIQQKI (84 aa)). The span at 43 to 55 (STSPQSPSSSTEN) shows a compositional bias: low complexity. One can recognise a Helicase ATP-binding domain in the interval 178-349 (DKRLLDGENC…ALRAFVYSTN (172 aa)). 191 to 198 (LPTGAGKT) is an ATP binding site. The short motif at 295 to 298 (DELH) is the DEAH box element. A Helicase C-terminal domain is found at 392 to 596 (GICQLLAKLI…CVVLKLAENI (205 aa)).

This sequence belongs to the helicase family. SKI2 subfamily.

Its subcellular location is the nucleus. It localises to the chromosome. The enzyme catalyses Couples ATP hydrolysis with the unwinding of duplex DNA by translocating in the 3'-5' direction.. The catalysed reaction is ATP + H2O = ADP + phosphate + H(+). In terms of biological role, single-stranded 3'-5' DNA helicase that plays a key role in homology-driven double-strand break (DSB) repair. Involved in different DSB repair mechanisms that are guided by annealing of extensive stretches of complementary bases at break ends, such as microhomology-mediated end-joining (MMEJ), single-strand annealing (SSA) or synthesis-dependent strand annealing (SDSA). The protein is Helicase POLQ-like of Caenorhabditis elegans.